The primary structure comprises 281 residues: NADPH-dependent 7-cyano-7-deazaguanine reductase (281 aa).

Residue 81–83 (VES) participates in substrate binding. 83 to 84 (SK) lines the NADPH pocket. Cys188 acts as the Thioimide intermediate in catalysis. Residue Asp195 is the Proton donor of the active site. 227–228 (HE) lines the substrate pocket. 256 to 257 (RG) serves as a coordination point for NADPH.

It belongs to the GTP cyclohydrolase I family. QueF type 2 subfamily. In terms of assembly, homodimer.

Its subcellular location is the cytoplasm. It carries out the reaction 7-aminomethyl-7-carbaguanine + 2 NADP(+) = 7-cyano-7-deazaguanine + 2 NADPH + 3 H(+). Its pathway is tRNA modification; tRNA-queuosine biosynthesis. Its function is as follows. Catalyzes the NADPH-dependent reduction of 7-cyano-7-deazaguanine (preQ0) to 7-aminomethyl-7-deazaguanine (preQ1). This is NADPH-dependent 7-cyano-7-deazaguanine reductase from Acidovorax ebreus (strain TPSY) (Diaphorobacter sp. (strain TPSY)).